The sequence spans 394 residues: 4-hydroxyphenylpyruvate dioxygenase (394 aa).

2 VOC domains span residues 27 to 161 and 193 to 351; these read GYDH…LIER and HIDH…LFTK. Positions 196, 279, and 362 each coordinate Fe cation.

It belongs to the 4HPPD family. It depends on Fe cation as a cofactor.

It carries out the reaction 3-(4-hydroxyphenyl)pyruvate + O2 = homogentisate + CO2. The protein operates within amino-acid degradation; L-phenylalanine degradation; acetoacetate and fumarate from L-phenylalanine: step 3/6. The chain is 4-hydroxyphenylpyruvate dioxygenase from Yarrowia lipolytica (strain CLIB 122 / E 150) (Yeast).